The following is a 411-amino-acid chain: D-ribitol-5-phosphate cytidylyltransferase (411 aa).

It belongs to the IspD/TarI cytidylyltransferase family. IspD subfamily. Homodimer.

The protein resides in the cytoplasm. The protein localises to the cytosol. It carries out the reaction D-ribitol 5-phosphate + CTP + H(+) = CDP-L-ribitol + diphosphate. It catalyses the reaction D-ribose 5-phosphate + CTP + H(+) = CDP-D-ribose + diphosphate. The catalysed reaction is D-ribulose 5-phosphate + CTP + H(+) = CDP-D-ribulose + diphosphate. It functions in the pathway protein modification; protein glycosylation. Functionally, cytidylyltransferase required for protein O-linked mannosylation. Catalyzes the formation of CDP-ribitol nucleotide sugar from D-ribitol 5-phosphate. CDP-ribitol is a substrate of FKTN during the biosynthesis of the phosphorylated O-mannosyl trisaccharide (N-acetylgalactosamine-beta-3-N-acetylglucosamine-beta-4-(phosphate-6-)mannose), a carbohydrate structure present in alpha-dystroglycan (DAG1), which is required for binding laminin G-like domain-containing extracellular proteins with high affinity. Shows activity toward other pentose phosphate sugars and mediates formation of CDP-ribulose or CDP-ribose using CTP and ribulose-5-phosphate or ribose-5-phosphate, respectively. Not involved in dolichol production. The polypeptide is D-ribitol-5-phosphate cytidylyltransferase (crppa) (Xenopus tropicalis (Western clawed frog)).